The following is a 512-amino-acid chain: Cytochrome P450 72A11 (512 aa).

The helical transmembrane segment at 2–22 threads the bilayer; that stretch reads EISVASVTVSVAVVVVSWWVW. C460 contacts heme.

This sequence belongs to the cytochrome P450 family. It depends on heme as a cofactor.

Its subcellular location is the membrane. The chain is Cytochrome P450 72A11 (CYP72A11) from Arabidopsis thaliana (Mouse-ear cress).